The chain runs to 524 residues: Nucleobase-ascorbate transporter 2 (524 aa).

12 consecutive transmembrane segments (helical) span residues 41–61 (YILALGTAVMIPSILVPMMGG), 69–89 (VVQTLLFLQGVNTLLQTLFGT), 91–111 (LPTVIGGSYAFMVPIISIIHD), 133–153 (GAIIVASSVQIILGFSQMWAI), 155–175 (SRFFSPIGMVPVIALTGFGLF), 179–199 (FPVVGNCVEIGLPMLILFVIF), 217–237 (FALIIALIIVWAYAHVLTASG), 282–302 (AFAMMAAVLVSLIESTGAFKA), 359–379 (RVIQISAGFMIFFSMLGKFGA), 380–400 (LFASIPFTIFAAVYCVLFGLV), 419–439 (LFIVGVSLFLGLSIPEYFRDF), and 457–477 (DFLNTIFLSSPMVALMVAVFL).

It belongs to the nucleobase:cation symporter-2 (NCS2) (TC 2.A.40) family. Expressed in cotyledons 10 days after imbibition (DAI). Expressed in the minor and major veins of cotyledons and leaves, in the shoot apex and pedicels. Expressed in the root meristems, root tips and lateral root primordia.

The protein resides in the membrane. This is Nucleobase-ascorbate transporter 2 (NAT2) from Arabidopsis thaliana (Mouse-ear cress).